The following is a 273-amino-acid chain: Formamidopyrimidine-DNA glycosylase (273 aa).

The active-site Schiff-base intermediate with DNA is Pro-2. Residue Glu-3 is the Proton donor of the active site. Lys-57 (proton donor; for beta-elimination activity) is an active-site residue. 3 residues coordinate DNA: His-91, Arg-110, and Lys-151. The segment at 236–270 (QVYGRKGEACNDCGTIIEAKVIGQRNSYFCPHCQI) adopts an FPG-type zinc-finger fold. Arg-260 functions as the Proton donor; for delta-elimination activity in the catalytic mechanism.

This sequence belongs to the FPG family. As to quaternary structure, monomer. Zn(2+) is required as a cofactor.

The enzyme catalyses Hydrolysis of DNA containing ring-opened 7-methylguanine residues, releasing 2,6-diamino-4-hydroxy-5-(N-methyl)formamidopyrimidine.. It carries out the reaction 2'-deoxyribonucleotide-(2'-deoxyribose 5'-phosphate)-2'-deoxyribonucleotide-DNA = a 3'-end 2'-deoxyribonucleotide-(2,3-dehydro-2,3-deoxyribose 5'-phosphate)-DNA + a 5'-end 5'-phospho-2'-deoxyribonucleoside-DNA + H(+). Functionally, involved in base excision repair of DNA damaged by oxidation or by mutagenic agents. Acts as a DNA glycosylase that recognizes and removes damaged bases. Has a preference for oxidized purines, such as 7,8-dihydro-8-oxoguanine (8-oxoG). Has AP (apurinic/apyrimidinic) lyase activity and introduces nicks in the DNA strand. Cleaves the DNA backbone by beta-delta elimination to generate a single-strand break at the site of the removed base with both 3'- and 5'-phosphates. The sequence is that of Formamidopyrimidine-DNA glycosylase from Actinobacillus pleuropneumoniae serotype 7 (strain AP76).